The chain runs to 573 residues: Formate--tetrahydrofolate ligase 3 (573 aa).

66 to 73 (TPLGEGKT) is a binding site for ATP.

This sequence belongs to the formate--tetrahydrofolate ligase family.

The catalysed reaction is (6S)-5,6,7,8-tetrahydrofolate + formate + ATP = (6R)-10-formyltetrahydrofolate + ADP + phosphate. The protein operates within one-carbon metabolism; tetrahydrofolate interconversion. In Rubrobacter xylanophilus (strain DSM 9941 / JCM 11954 / NBRC 16129 / PRD-1), this protein is Formate--tetrahydrofolate ligase 3.